Consider the following 795-residue polypeptide: MLKTLNRRSWTCRQCIRILRRNAETRRYFQGASAASPLCQHTVSSSTSDKARDDQTLRLIFDSEPFWREFSQPKSSTSKRTGLLQNQYLTGPDGFLQFAQVSLQKCQKIVAKVIAASTLEDYRGMVRDLDRLSDLLCRVIDMAEFMKLNHPSPQIQDAATQAYALMFEYMNVLNTTPELDAQLKRASADLNVTSHWSPEEKVAARVLLKDFSQSAIHLPPKDRQKFVALSNEISQLGPMFVTNRQPETDHVTVDKNKLRGMDPSLIQQLQRWRKVAVPMFGDIPRIALYSVHDEETRKEIYVTSRTSSKVQIRRLETLLQKRAELAKLAGFPSYAHMTLSDKMAKTPEAVVNFLEALNASNRGQVQDELSQLLALKQADVPSATQLQPWDHAYYVHQYSARHSRVRRSRESTLLPAFFSIGTVIQGLSRLFTRLYGIRLVPTETLPGEIWNPDVRRLDVVDESDRRLAVIYCDLFTRPYKSPNPTHFTLRGSREISQAEIAECADLSSSLHPNDGMATTIKPETNKLYQLPTVALICDFDQSESRSTPSLLNEHNLETLFHEMGHAVHSVLARTDLQTISGTRCATDFVELPSVIMENFATAPEVLALYARHWETNEPLPEHMVKSMELNRQSRVSMHGGMDNEVQILMALLDQAYHSSRPLEPNFDSTRIYHDVYSTHSSLPDPPGSRTSWQGYFAHLVGYGATYYSYLFDRAIANKVWSDVFKGGELSTNRDAGERFKNEVLRWGGGRDGWNCVAGLLGNNPANDNGKLAEGGEEAMREVGRWGLGLMGTSEL.

The transit peptide at 1 to 22 (MLKTLNRRSWTCRQCIRILRRN) directs the protein to the mitochondrion. H561 is a binding site for Zn(2+). E562 is an active-site residue. The Zn(2+) site is built by H565 and H568.

The protein belongs to the peptidase M3 family. Zn(2+) is required as a cofactor.

It localises to the mitochondrion matrix. The catalysed reaction is Release of an N-terminal octapeptide as second stage of processing of some proteins imported into the mitochondrion.. Its function is as follows. Cleaves proteins, imported into the mitochondrion, to their mature size. While most mitochondrial precursor proteins are processed to the mature form in one step by mitochondrial processing peptidase (MPP), the sequential cleavage by MIP of an octapeptide after initial processing by MPP is a required step for a subgroup of nuclear-encoded precursor proteins destined for the matrix or the inner membrane. This Coccidioides immitis (strain RS) (Valley fever fungus) protein is Mitochondrial intermediate peptidase (OCT1).